Here is a 334-residue protein sequence, read N- to C-terminus: Anthranilate phosphoribosyltransferase (334 aa).

5-phospho-alpha-D-ribose 1-diphosphate contacts are provided by residues G79, 82–83, S87, 89–92, 107–115, and S119; these read GD, NIST, and KAGNRSISS. Residue G79 participates in anthranilate binding. S91 provides a ligand contact to Mg(2+). N110 contacts anthranilate. Residue R165 participates in anthranilate binding. Mg(2+) contacts are provided by D224 and E225.

It belongs to the anthranilate phosphoribosyltransferase family. As to quaternary structure, homodimer. The cofactor is Mg(2+).

It catalyses the reaction N-(5-phospho-beta-D-ribosyl)anthranilate + diphosphate = 5-phospho-alpha-D-ribose 1-diphosphate + anthranilate. It functions in the pathway amino-acid biosynthesis; L-tryptophan biosynthesis; L-tryptophan from chorismate: step 2/5. Catalyzes the transfer of the phosphoribosyl group of 5-phosphorylribose-1-pyrophosphate (PRPP) to anthranilate to yield N-(5'-phosphoribosyl)-anthranilate (PRA). In Streptococcus thermophilus (strain ATCC BAA-491 / LMD-9), this protein is Anthranilate phosphoribosyltransferase.